The primary structure comprises 262 residues: GTP cyclohydrolase 1 type 2 homolog (262 aa).

H64, H65, D103, H224, and E228 together coordinate a divalent metal cation.

This sequence belongs to the GTP cyclohydrolase I type 2/NIF3 family. Homohexamer.

The chain is GTP cyclohydrolase 1 type 2 homolog from Clostridium perfringens (strain 13 / Type A).